A 180-amino-acid polypeptide reads, in one-letter code: Probable RNA 2'-phosphotransferase (180 aa).

The protein belongs to the KptA/TPT1 family.

Its function is as follows. Removes the 2'-phosphate from RNA via an intermediate in which the phosphate is ADP-ribosylated by NAD followed by a presumed transesterification to release the RNA and generate ADP-ribose 1''-2''-cyclic phosphate (APPR&gt;P). May function as an ADP-ribosylase. The chain is Probable RNA 2'-phosphotransferase from Pectobacterium atrosepticum (strain SCRI 1043 / ATCC BAA-672) (Erwinia carotovora subsp. atroseptica).